Reading from the N-terminus, the 268-residue chain is Tryptophan synthase alpha chain (268 aa).

Active-site proton acceptor residues include Glu-49 and Asp-60.

Belongs to the TrpA family. Tetramer of two alpha and two beta chains.

The catalysed reaction is (1S,2R)-1-C-(indol-3-yl)glycerol 3-phosphate + L-serine = D-glyceraldehyde 3-phosphate + L-tryptophan + H2O. It functions in the pathway amino-acid biosynthesis; L-tryptophan biosynthesis; L-tryptophan from chorismate: step 5/5. Its function is as follows. The alpha subunit is responsible for the aldol cleavage of indoleglycerol phosphate to indole and glyceraldehyde 3-phosphate. This chain is Tryptophan synthase alpha chain, found in Aliivibrio fischeri (strain MJ11) (Vibrio fischeri).